The chain runs to 196 residues: Endonuclease V (196 aa).

Aspartate 37 and aspartate 98 together coordinate Mg(2+).

The protein belongs to the endonuclease V family. It depends on Mg(2+) as a cofactor.

It is found in the cytoplasm. The catalysed reaction is Endonucleolytic cleavage at apurinic or apyrimidinic sites to products with a 5'-phosphate.. DNA repair enzyme involved in the repair of deaminated bases. Selectively cleaves double-stranded DNA at the second phosphodiester bond 3' to a deoxyinosine leaving behind the intact lesion on the nicked DNA. The protein is Endonuclease V of Sulfolobus acidocaldarius (strain ATCC 33909 / DSM 639 / JCM 8929 / NBRC 15157 / NCIMB 11770).